Reading from the N-terminus, the 147-residue chain is Small ribosomal subunit protein uS9 (147 aa).

Positions 128–147 (KERKKYGQMGARAKYRWSKR) are disordered.

Belongs to the universal ribosomal protein uS9 family.

The chain is Small ribosomal subunit protein uS9 (rpsI) from Aquifex aeolicus (strain VF5).